Reading from the N-terminus, the 149-residue chain is Calmodulin-6 (149 aa).

4 EF-hand domains span residues 8–43 (DQISEFKEAFSLFDKDGDGCITTKELGTVMRSLGQN), 44–79 (PTEAELQDMINEVDADGNGTIDFPEFLNLMARKMKD), 81–116 (DSEEELKEAFRVFDKDQNGFISAAELRHVMTNLGEK), and 117–149 (LSDEEVDEMIREADVDGDGQINYEEFVKVMMAK). Asp21, Asp23, Asp25, Cys27, Glu32, Asp57, Asp59, Asn61, Thr63, Glu68, Asp94, Asp96, Asn98, Glu105, Asp130, Asp132, Asp134, Gln136, and Glu141 together coordinate Ca(2+).

The protein belongs to the calmodulin family. Interacts with KCBP.

Its function is as follows. Calmodulin mediates the control of a large number of enzymes, ion channels and other proteins by Ca(2+). Among the enzymes to be stimulated by the calmodulin-Ca(2+) complex are a number of protein kinases and phosphatases. This chain is Calmodulin-6 (CAM6), found in Arabidopsis thaliana (Mouse-ear cress).